The chain runs to 540 residues: DM7 family protein GM11956 (540 aa).

The disordered stretch occupies residues 416–443 (ATDTRGRDEIRTSCDQPQEKDEGSAEAD). Residues 417–443 (TDTRGRDEIRTSCDQPQEKDEGSAEAD) show a composition bias toward basic and acidic residues.

This sequence belongs to the DM7 family.

The polypeptide is DM7 family protein GM11956 (Drosophila sechellia (Fruit fly)).